Consider the following 542-residue polypeptide: Chaperonin GroEL 4 (542 aa).

Residues 30–33 (TLGP), lysine 51, 87–91 (DGTTT), glycine 415, and aspartate 496 contribute to the ATP site.

The protein belongs to the chaperonin (HSP60) family. As to quaternary structure, forms a cylinder of 14 subunits composed of two heptameric rings stacked back-to-back. Interacts with the co-chaperonin GroES.

The protein localises to the cytoplasm. It catalyses the reaction ATP + H2O + a folded polypeptide = ADP + phosphate + an unfolded polypeptide.. In terms of biological role, together with its co-chaperonin GroES, plays an essential role in assisting protein folding. The GroEL-GroES system forms a nano-cage that allows encapsulation of the non-native substrate proteins and provides a physical environment optimized to promote and accelerate protein folding. The protein is Chaperonin GroEL 4 of Rhizobium etli (strain ATCC 51251 / DSM 11541 / JCM 21823 / NBRC 15573 / CFN 42).